The following is a 299-amino-acid chain: HTH-type transcriptional regulator CrgA (299 aa).

The HTH lysR-type domain maps to 1–60; the sequence is MKTNSEELTVFVQVVESGSFSRAAEQLAMANSAVSRIVKRLEEKLGVNLLNRTTRQLSLT. Residues 20-39 constitute a DNA-binding region (H-T-H motif); that stretch reads FSRAAEQLAMANSAVSRIVK.

Belongs to the LysR transcriptional regulatory family. As to quaternary structure, forms oligomers. Forms an octomeric ring-like structure in solution. May form hexadecamers when bound to target DNA.

Its activity is regulated as follows. Activation and repression activities are enhanced by the addition of alpha-methylene-gamma-butyrolactone (MBL), an inducer of NADPH:quinone oxidoreductase. Regulatory protein that activates transcription of mdaB, encoding a NADPH:quinone oxidoreductase, and represses its own transcription. Under the same experimental conditions, no regulation of transcription of pilus and capsule genes is detected. This chain is HTH-type transcriptional regulator CrgA, found in Neisseria meningitidis serogroup B (strain ATCC BAA-335 / MC58).